The chain runs to 603 residues: Translation initiation factor IF-2 (603 aa).

The tr-type G domain occupies 112–279; it reads TRPPIITIMG…NINLQAEILD (168 aa). Residues 121–128 are G1; that stretch reads GHVDHGKT. 121–128 is a GTP binding site; the sequence is GHVDHGKT. The tract at residues 146–150 is G2; that stretch reads GITQH. Positions 167–170 are G3; sequence DTPG. Residues 167–171 and 221–224 contribute to the GTP site; these read DTPGH and NKMD. Residues 221–224 form a G4 region; the sequence is NKMD. The tract at residues 257–259 is G5; it reads SAL.

This sequence belongs to the TRAFAC class translation factor GTPase superfamily. Classic translation factor GTPase family. IF-2 subfamily.

It localises to the cytoplasm. One of the essential components for the initiation of protein synthesis. Protects formylmethionyl-tRNA from spontaneous hydrolysis and promotes its binding to the 30S ribosomal subunits. Also involved in the hydrolysis of GTP during the formation of the 70S ribosomal complex. This is Translation initiation factor IF-2 from Mycoplasmopsis pulmonis (strain UAB CTIP) (Mycoplasma pulmonis).